The sequence spans 233 residues: Outer membrane protein MIP (233 aa).

A signal peptide spans Met1 to Ala20. The PPIase FKBP-type domain occupies Ser144–Ser233.

The protein belongs to the FKBP-type PPIase family.

It is found in the cell outer membrane. It carries out the reaction [protein]-peptidylproline (omega=180) = [protein]-peptidylproline (omega=0). Its function is as follows. Essential virulence factor associated with macrophage infectivity. Exhibits PPIase activity. The polypeptide is Outer membrane protein MIP (mip) (Legionella pneumophila (strain Corby)).